The sequence spans 276 residues: Undecaprenyl-diphosphatase (276 aa).

8 consecutive transmembrane segments (helical) span residues 1–21, 39–59, 84–104, 115–135, 159–179, 190–210, 222–242, and 253–273; these read MSWLQVVVLSVLQGLTEFLPV, AGASFTAVCQLGTEAAVLVYF, YWLGWWVIIGTIPISVIGLLF, LWLVATAMIVFSFVIAAAEYA, LALVPGVSRSGATISAGLFLG, FLLAIPAVFASGLFSLPDAFA, QLLVSTVIAFVVGYAAVAWFL, and FVGYRIILGSVVLILLSTGVV.

Belongs to the UppP family.

It is found in the cell membrane. It carries out the reaction di-trans,octa-cis-undecaprenyl diphosphate + H2O = di-trans,octa-cis-undecaprenyl phosphate + phosphate + H(+). Its function is as follows. Catalyzes the dephosphorylation of undecaprenyl diphosphate (UPP). Confers resistance to bacitracin. The protein is Undecaprenyl-diphosphatase of Mycolicibacterium gilvum (strain PYR-GCK) (Mycobacterium gilvum (strain PYR-GCK)).